Reading from the N-terminus, the 245-residue chain is Uridylate kinase (245 aa).

ATP is bound at residue 12–15 (KLSG). The interval 20-25 (GEKGVG) is involved in allosteric activation by GTP. G54 is a binding site for UMP. Residues G55 and R59 each contribute to the ATP site. UMP contacts are provided by residues D74 and 135 to 142 (IGSPYFST). N163, Y169, and D172 together coordinate ATP.

This sequence belongs to the UMP kinase family. In terms of assembly, homohexamer.

It is found in the cytoplasm. The enzyme catalyses UMP + ATP = UDP + ADP. It functions in the pathway pyrimidine metabolism; CTP biosynthesis via de novo pathway; UDP from UMP (UMPK route): step 1/1. Its activity is regulated as follows. Allosterically activated by GTP. Inhibited by UTP. Catalyzes the reversible phosphorylation of UMP to UDP. In Streptococcus thermophilus (strain ATCC BAA-491 / LMD-9), this protein is Uridylate kinase.